Reading from the N-terminus, the 158-residue chain is 3-hydroxyacyl-[acyl-carrier-protein] dehydratase FabZ (158 aa).

Residue H57 is part of the active site.

It belongs to the thioester dehydratase family. FabZ subfamily.

It is found in the cytoplasm. The catalysed reaction is a (3R)-hydroxyacyl-[ACP] = a (2E)-enoyl-[ACP] + H2O. Functionally, involved in unsaturated fatty acids biosynthesis. Catalyzes the dehydration of short chain beta-hydroxyacyl-ACPs and long chain saturated and unsaturated beta-hydroxyacyl-ACPs. In Helicobacter acinonychis (strain Sheeba), this protein is 3-hydroxyacyl-[acyl-carrier-protein] dehydratase FabZ.